The following is an 86-amino-acid chain: MKNLIAELLVKLAQKEEESKELVAQVEALEIVVTALLRQMAQTDQQALIQSIESALEDARPGSQVPVQDSEMLQQYVKKLLRHPRN.

A coiled-coil region spans residues 1–42 (MKNLIAELLVKLAQKEEESKELVAQVEALEIVVTALLRQMAQ).

Belongs to the IraP family. Interacts with RssB.

It is found in the cytoplasm. Its function is as follows. Inhibits RpoS proteolysis by regulating RssB activity, thereby increasing the stability of the sigma stress factor RpoS especially during phosphate starvation, but also in stationary phase and during nitrogen starvation. Its effect on RpoS stability is due to its interaction with RssB, which probably blocks the interaction of RssB with RpoS, and the consequent delivery of the RssB-RpoS complex to the ClpXP protein degradation pathway. This is Anti-adapter protein IraP from Enterobacter sp. (strain 638).